The primary structure comprises 206 residues: Probable glutathione S-transferase 8 (206 aa).

The 78-residue stretch at valine 2 to glycine 79 folds into the GST N-terminal domain. Residues tyrosine 8, tryptophan 39, lysine 43, glycine 49–leucine 51, and glutamine 63–serine 64 contribute to the glutathione site. Residues cysteine 81 to phenylalanine 206 enclose the GST C-terminal domain.

It belongs to the GST superfamily. Sigma family.

The enzyme catalyses RX + glutathione = an S-substituted glutathione + a halide anion + H(+). In terms of biological role, conjugation of reduced glutathione to a wide number of exogenous and endogenous hydrophobic electrophiles. This is Probable glutathione S-transferase 8 (gst-8) from Caenorhabditis elegans.